Consider the following 166-residue polypeptide: Transcription elongation factor GreA (166 aa).

Belongs to the GreA/GreB family.

Necessary for efficient RNA polymerase transcription elongation past template-encoded arresting sites. The arresting sites in DNA have the property of trapping a certain fraction of elongating RNA polymerases that pass through, resulting in locked ternary complexes. Cleavage of the nascent transcript by cleavage factors such as GreA or GreB allows the resumption of elongation from the new 3'terminus. GreA releases sequences of 2 to 3 nucleotides. This chain is Transcription elongation factor GreA, found in Anaeromyxobacter sp. (strain K).